The chain runs to 100 residues: Urease subunit gamma (100 aa).

This sequence belongs to the urease gamma subunit family. Heterotrimer of UreA (gamma), UreB (beta) and UreC (alpha) subunits. Three heterotrimers associate to form the active enzyme.

It localises to the cytoplasm. The catalysed reaction is urea + 2 H2O + H(+) = hydrogencarbonate + 2 NH4(+). It participates in nitrogen metabolism; urea degradation; CO(2) and NH(3) from urea (urease route): step 1/1. The protein is Urease subunit gamma of Burkholderia cenocepacia (strain ATCC BAA-245 / DSM 16553 / LMG 16656 / NCTC 13227 / J2315 / CF5610) (Burkholderia cepacia (strain J2315)).